A 61-amino-acid chain; its full sequence is Small ribosomal subunit protein uS14 (61 aa).

Zn(2+) is bound by residues Cys-24, Cys-27, Cys-40, and Cys-43.

Belongs to the universal ribosomal protein uS14 family. Zinc-binding uS14 subfamily. In terms of assembly, part of the 30S ribosomal subunit. Contacts proteins S3 and S10. Requires Zn(2+) as cofactor.

Its function is as follows. Binds 16S rRNA, required for the assembly of 30S particles and may also be responsible for determining the conformation of the 16S rRNA at the A site. This chain is Small ribosomal subunit protein uS14, found in Endomicrobium trichonymphae.